The primary structure comprises 1113 residues: Antigenic protein P1 (1113 aa).

The helical transmembrane segment at 7–27 threads the bilayer; sequence IIAVVAIASAIVTGVVVIVVV. N-linked (GlcNAc...) asparagine glycosylation is found at Asn121, Asn207, Asn225, Asn233, Asn274, Asn533, Asn576, Asn622, Asn675, Asn679, Asn730, Asn753, Asn880, Asn899, Asn907, Asn972, and Asn995. Residues 159-473 enclose the Peptidase M60 domain; it reads VFGQRAVAWA…SYVNMAHAFG (315 aa). The 153-residue stretch at 648–800 folds into the PA14 domain; the sequence is LDPHQVEYEV…TEESSVDVSK (153 aa).

Its subcellular location is the membrane. This is Antigenic protein P1 from Entamoeba histolytica (strain ATCC 30459 / HM-1:IMSS / ABRM).